Here is a 363-residue protein sequence, read N- to C-terminus: Uptake hydrogenase small subunit (363 aa).

The tat-type signal signal peptide spans 1-46 (MGAATETFYSVIRRQGITRRSFHKFCSLTATSLGLGPLAASRIANA). The [4Fe-4S] cluster site is built by Cys-63, Cys-66, Cys-161, Cys-195, His-233, Cys-236, Cys-261, and Cys-267. 3 residues coordinate [3Fe-4S] cluster: Cys-276, Cys-295, and Cys-298.

The protein belongs to the [NiFe]/[NiFeSe] hydrogenase small subunit family. In terms of assembly, heterodimer of a large and a small subunit. [4Fe-4S] cluster is required as a cofactor. It depends on [3Fe-4S] cluster as a cofactor. Predicted to be exported by the Tat system. The position of the signal peptide cleavage has not been experimentally proven.

Its subcellular location is the cell membrane. It carries out the reaction H2 + A = AH2. In terms of biological role, this enzyme recycles the H(2) produced by nitrogenase to increase the production of ATP and to protect nitrogenase against inhibition or damage by O(2) under carbon- or phosphate-limited conditions. This chain is Uptake hydrogenase small subunit (hupA), found in Bradyrhizobium diazoefficiens (strain JCM 10833 / BCRC 13528 / IAM 13628 / NBRC 14792 / USDA 110).